A 94-amino-acid chain; its full sequence is Enhancer of yellow 2 transcription factor (94 aa).

This sequence belongs to the ENY2 family. As to quaternary structure, component of the nuclear pore complex (NPC)-associated AMEX complex (anchoring and mRNA export complex), composed of at least e(y)2 and xmas-2. Component of the SAGA transcription coactivator-HAT complexes, at least composed of Ada2b, e(y)2, Pcaf/Gcn5, Taf10 and Nipped-A/Trrap. Within the SAGA complex, e(y)2, Sgf11, and not/nonstop form an additional subcomplex of SAGA called the DUB module (deubiquitination module). Component of the THO complex, composed of at least e(y)2, HPR1, THO2, THOC5, THOC6 and THOC7. Interacts with e(y)1. Interacts with su(Hw) (via zinc fingers). Interacts with xmas-2; required for localization to the nuclear periphery. Interacts with the nuclear pore complex (NPC).

Its subcellular location is the nucleus. It is found in the nucleoplasm. The protein resides in the cytoplasm. In terms of biological role, involved in mRNA export coupled transcription activation by association with both the AMEX and the SAGA complexes. The SAGA complex is a multiprotein complex that activates transcription by remodeling chromatin and mediating histone acetylation and deubiquitination. Within the SAGA complex, participates in a subcomplex that specifically deubiquitinates histone H2B. The SAGA complex is recruited to specific gene promoters by activators, where it is required for transcription. Required for nuclear receptor-mediated transactivation. Involved in transcription elongation by recruiting the THO complex onto nascent mRNA. The AMEX complex functions in docking export-competent ribonucleoprotein particles (mRNPs) to the nuclear entrance of the nuclear pore complex (nuclear basket). AMEX participates in mRNA export and accurate chromatin positioning in the nucleus by tethering genes to the nuclear periphery. This is Enhancer of yellow 2 transcription factor from Drosophila mojavensis (Fruit fly).